Consider the following 192-residue polypeptide: Large ribosomal subunit protein bL25 (192 aa).

It belongs to the bacterial ribosomal protein bL25 family. CTC subfamily. In terms of assembly, part of the 50S ribosomal subunit; part of the 5S rRNA/L5/L18/L25 subcomplex. Contacts the 5S rRNA. Binds to the 5S rRNA independently of L5 and L18.

Functionally, this is one of the proteins that binds to the 5S RNA in the ribosome where it forms part of the central protuberance. In Solidesulfovibrio magneticus (strain ATCC 700980 / DSM 13731 / RS-1) (Desulfovibrio magneticus), this protein is Large ribosomal subunit protein bL25.